The sequence spans 499 residues: Calcium/calmodulin-dependent protein kinase type II subunit delta (499 aa).

Residue alanine 2 is modified to N-acetylalanine. The Protein kinase domain occupies 14 to 272 (YQLFEELGKG…ASEALKHPWI (259 aa)). ATP-binding positions include 20-28 (LGKGAFSVV) and lysine 43. Residue aspartate 136 is the Proton acceptor of the active site. Residues 283-292 (HRQETVDCLK) form an autoinhibitory domain region. Threonine 287 is subject to Phosphothreonine; by autocatalysis. The segment at 291–301 (LKKFNARRKLK) is calmodulin-binding. 2 positions are modified to phosphothreonine; by autocatalysis: threonine 306 and threonine 307. Serine 315 is subject to Phosphoserine. An N6-acetyllysine modification is found at lysine 318. A phosphoserine mark is found at serine 319 and serine 330. Threonine 331 is subject to Phosphothreonine. Serine 333 is subject to Phosphoserine. Residues threonine 336 and threonine 337 each carry the phosphothreonine modification. 3 positions are modified to phosphoserine: serine 404, serine 490, and serine 494.

It belongs to the protein kinase superfamily. CAMK Ser/Thr protein kinase family. CaMK subfamily. As to quaternary structure, CAMK2 is composed of 4 different chains: alpha (CAMK2A), beta (CAMK2B), gamma (CAMK2G), and delta (CAMK2D). The different isoforms assemble into homo- or heteromultimeric holoenzymes composed of 12 subunits with two hexameric rings stacked one on top of the other. Interacts with RRAD CACNB2. Post-translationally, autophosphorylation of Thr-287 following activation by Ca(2+)/calmodulin. Phosphorylation of Thr-287 locks the kinase into an activated state.

It localises to the cell membrane. Its subcellular location is the sarcolemma. The protein localises to the sarcoplasmic reticulum membrane. It catalyses the reaction L-seryl-[protein] + ATP = O-phospho-L-seryl-[protein] + ADP + H(+). The enzyme catalyses L-threonyl-[protein] + ATP = O-phospho-L-threonyl-[protein] + ADP + H(+). Its activity is regulated as follows. Activated by Ca(2+)/calmodulin. Binding of calmodulin results in conformational change that relieves intrasteric autoinhibition and allows autophosphorylation of Thr-287 which turns the kinase in a constitutively active form and confers to the kinase a Ca(2+)-independent activity. Functionally, calcium/calmodulin-dependent protein kinase involved in the regulation of Ca(2+) homeostatis and excitation-contraction coupling (ECC) in heart by targeting ion channels, transporters and accessory proteins involved in Ca(2+) influx into the myocyte, Ca(2+) release from the sarcoplasmic reticulum (SR), SR Ca(2+) uptake and Na(+) and K(+) channel transport. Targets also transcription factors and signaling molecules to regulate heart function. In its activated form, is involved in the pathogenesis of dilated cardiomyopathy and heart failure. Contributes to cardiac decompensation and heart failure by regulating SR Ca(2+) release via direct phosphorylation of RYR2 Ca(2+) channel on 'Ser-2808'. In the nucleus, phosphorylates the MEF2 repressor HDAC4, promoting its nuclear export and binding to 14-3-3 protein, and expression of MEF2 and genes involved in the hypertrophic program. Is essential for left ventricular remodeling responses to myocardial infarction. In pathological myocardial remodeling acts downstream of the beta adrenergic receptor signaling cascade to regulate key proteins involved in ECC. Regulates Ca(2+) influx to myocytes by binding and phosphorylating the L-type Ca(2+) channel subunit beta-2 CACNB2. In addition to Ca(2+) channels, can target and regulate the cardiac sarcolemmal Na(+) channel Nav1.5/SCN5A and the K+ channel Kv4.3/KCND3, which contribute to arrhythmogenesis in heart failure. Phosphorylates phospholamban (PLN/PLB), an endogenous inhibitor of SERCA2A/ATP2A2, contributing to the enhancement of SR Ca(2+) uptake that may be important in frequency-dependent acceleration of relaxation (FDAR) and maintenance of contractile function during acidosis. May participate in the modulation of skeletal muscle function in response to exercise, by regulating SR Ca(2+) transport through phosphorylation of PLN/PLB and triadin, a ryanodine receptor-coupling factor. In response to interferon-gamma (IFN-gamma) stimulation, catalyzes phosphorylation of STAT1, stimulating the JAK-STAT signaling pathway. In Sus scrofa (Pig), this protein is Calcium/calmodulin-dependent protein kinase type II subunit delta (CAMK2D).